The following is a 344-amino-acid chain: Phenylalanine--tRNA ligase alpha subunit (344 aa).

E256 is a Mg(2+) binding site.

This sequence belongs to the class-II aminoacyl-tRNA synthetase family. Phe-tRNA synthetase alpha subunit type 1 subfamily. Tetramer of two alpha and two beta subunits. The cofactor is Mg(2+).

Its subcellular location is the cytoplasm. The enzyme catalyses tRNA(Phe) + L-phenylalanine + ATP = L-phenylalanyl-tRNA(Phe) + AMP + diphosphate + H(+). The polypeptide is Phenylalanine--tRNA ligase alpha subunit (pheS) (Halalkalibacterium halodurans (strain ATCC BAA-125 / DSM 18197 / FERM 7344 / JCM 9153 / C-125) (Bacillus halodurans)).